The following is a 262-amino-acid chain: NADPH-dependent 7-cyano-7-deazaguanine reductase (262 aa).

Isoleucine 69–serine 71 contacts substrate. An NADPH-binding site is contributed by serine 71 to lysine 72. Cysteine 170 (thioimide intermediate) is an active-site residue. Aspartate 177 functions as the Proton donor in the catalytic mechanism. Histidine 209–glutamate 210 is a binding site for substrate. Arginine 238 to glycine 239 serves as a coordination point for NADPH.

The protein belongs to the GTP cyclohydrolase I family. QueF type 2 subfamily. Homodimer.

The protein resides in the cytoplasm. The enzyme catalyses 7-aminomethyl-7-carbaguanine + 2 NADP(+) = 7-cyano-7-deazaguanine + 2 NADPH + 3 H(+). It participates in tRNA modification; tRNA-queuosine biosynthesis. Catalyzes the NADPH-dependent reduction of 7-cyano-7-deazaguanine (preQ0) to 7-aminomethyl-7-deazaguanine (preQ1). This is NADPH-dependent 7-cyano-7-deazaguanine reductase from Buchnera aphidicola subsp. Schizaphis graminum (strain Sg).